The following is a 151-amino-acid chain: NADH dehydrogenase [ubiquinone] 1 beta subcomplex subunit 11, mitochondrial (151 aa).

A mitochondrion-targeting transit peptide spans 1–29; it reads MAARLLSLYGRCLSAAGAMRGLPAARVRW. Residues 40 to 62 are disordered; that stretch reads GVEKKRQREPTMQWQEDPEPEDE. A helical membrane pass occupies residues 87–107; it reads AVFFFGFSIVLVFGTTFVAYV.

Belongs to the complex I NDUFB11 subunit family. As to quaternary structure, complex I is composed of 45 different subunits. Interacts with BCAP31.

Its subcellular location is the mitochondrion inner membrane. Its function is as follows. Accessory subunit of the mitochondrial membrane respiratory chain NADH dehydrogenase (Complex I), that is believed not to be involved in catalysis. Complex I functions in the transfer of electrons from NADH to the respiratory chain. The immediate electron acceptor for the enzyme is believed to be ubiquinone. The protein is NADH dehydrogenase [ubiquinone] 1 beta subcomplex subunit 11, mitochondrial (Ndufb11) of Mus musculus (Mouse).